The following is a 238-amino-acid chain: uncharacterized protein (238 aa).

This is an uncharacterized protein from Mycobacterium tuberculosis (strain ATCC 25618 / H37Rv).